We begin with the raw amino-acid sequence, 121 residues long: UPF0102 protein BDI_2565 (121 aa).

This sequence belongs to the UPF0102 family.

In Parabacteroides distasonis (strain ATCC 8503 / DSM 20701 / CIP 104284 / JCM 5825 / NCTC 11152), this protein is UPF0102 protein BDI_2565.